The chain runs to 559 residues: Formate--tetrahydrofolate ligase (559 aa).

68–75 (TPAGEGKT) is an ATP binding site.

The protein belongs to the formate--tetrahydrofolate ligase family. Homotetramer.

It catalyses the reaction (6S)-5,6,7,8-tetrahydrofolate + formate + ATP = (6R)-10-formyltetrahydrofolate + ADP + phosphate. Its pathway is one-carbon metabolism; tetrahydrofolate interconversion. The protein is Formate--tetrahydrofolate ligase of Moorella thermoacetica (Clostridium thermoaceticum).